A 1031-amino-acid chain; its full sequence is uncharacterized protein (1031 aa).

The SWIM-type zinc-finger motif lies at 50 to 85 (FKVQINLKTAAAHLDCSCSNDKQNCVHIIAALLKYN). In terms of domain architecture, Helicase ATP-binding spans 590–751 (RALEDNQFGG…WSCFDFVLPN (162 aa)). An ATP-binding site is contributed by 603–610 (DEMGLGKT). Residues 702-705 (DEAQ) carry the DEAQ box motif. In terms of domain architecture, Helicase C-terminal spans 868 to 1022 (ALNIIYEALE…EDVNFFKSLS (155 aa)).

The protein belongs to the SNF2/RAD54 helicase family.

This is an uncharacterized protein from Mycoplasma genitalium (strain ATCC 33530 / DSM 19775 / NCTC 10195 / G37) (Mycoplasmoides genitalium).